The primary structure comprises 536 residues: Cytochrome P450 monooxygenase phqM (536 aa).

C464 provides a ligand contact to heme.

This sequence belongs to the cytochrome P450 family. The cofactor is heme.

It participates in alkaloid biosynthesis. Cytochrome P450 monooxygenase; part of the gene cluster that mediates the biosynthesis of paraherquamide, a fungal indole alkaloid that belongs to a family of natural products containing a characteristic bicyclo[2.2.2]diazaoctane core. The first steps in the biosynthesis of paraherquamide is the production of the beta-methyl-proline precursor from L-isoleucine. They require oxidation of a terminally hydroxylated L-isoleucine to the corresponding aldehyde by enzymes which have still to be identified. Spontaneous cyclization and dehydration would yield the 4-methyl pyrolline-5-carboxylic acid, which is then reduced by the pyrroline-5-carboxylate reductase phqD leading to the beta-methyl-proline precursor. The next step of paraherquamide biosynthesis involves coupling of beta-methyl-proline and L-tryptophan by the bimodular NRPS phqB, to produce a monooxopiperazine intermediate. The reductase (R) domain of phqB utilizes NADPH for hydride transfer to reduce the thioester bond of the T domain-tethered linear dipeptide to a hemithioaminal intermediate, which spontaneously cleaves the C-S bond to release the aldehyde product. This compound undergoes spontaneous cyclization and dehydration to give a dienamine which is reverse prenylated at C-2 by the reverse prenyltransferase phqJ. The other prenyltransferase present in the cluster, phqI may be a redundant gene in the pathway. During biosynthetic assembly, the key step to produce the polycyclic core is catalyzed by the bifunctional reductase and intramolecular [4+2] Diels-Alderase, phqE, resulting in formation of the [2.2.2] diazaoctane intermediate preparaherquamide. Following formation of preparaherquamide, an indole 2,3-epoxidation-initiated pinacol-like rearrangement is catalyzed by the phqK FAD-dependent monooxygenase. The prenyltransferase phqA, the cytochrome P450 monooxygenase phqL, and the FAD-linked oxidoreductase phqH (or the cytochrome P450 monooxygenase phqM), are proposed to be involved in the formation of the pyran ring. The FAD-dependent monooxygenase phqK is likely responsible for generation of the spiro-oxindole, and the N-methylation is likely mediated by the phqN methyltransferase leading to the isolable natural product paraherquamide F. However, the order of these biosynthetic steps has still to be determined. In late-stage paraherquamide biosynthesis, the third P450 monooxygenase, phqO, is probably responsible for the C-14 hydroxylation, transforming paraherquamide F to paraherquamide G, and paraherquamide E to the final product paraherquamide A. The expansion from the 6-membered ring pyran (in paraherquamides F and G) to the 7-membered dioxepin ring (in paraherquamides A and E) represents a poorly understood but intriguing process that probably involves the 2-oxoglutarate-dependent dioxygenase phqC. Finally, the remaining members of the paraherquamide cluster, including phqI as well as phqM (or phqH), do not have a clearly prescribed role and appear to be redundant. In Penicillium fellutanum, this protein is Cytochrome P450 monooxygenase phqM.